The primary structure comprises 705 residues: MPRNTALEKYRNIGICAHVDAGKTTTTERILFYTGLSHKIGEVHDGAATMDWMEQEQERGITITSAATTTFWSGMDQQFDKHRINIIDTPGHVDFTIEVERSLRVLDGAVVVFCGSSGVEPQSETVWRQANKYGVPRIVFVNKMDRSGADFERVCGQIRTRLKANVVPVQLNIGAEEDFKGVVDLIRMKAIMWNEADQGLTYDLVDIPAELQDRAEELRMEMMEAAAEASEELMDKYLEEGELSNEEIKQGLRARVLANEIVLAFCGSAFKNKGVQAVLDGVVEYLPAPNQVPAIKCETEDGEPASRSSSDDEPFAALAFKLATDPFVGNLTFIRVYSGVLKSGDAVYNPVKGKKERVGRIVQMHANKREEIKEVRAGDIAACIGLKDVTTGDTLCDLDKPVILERMDFPEPVISVAVEPKTKADQEKMSIALGKLAAEDPSFRVKTDEESGQTIISGMGELHLDIIVDRMRREFKVEANVGNPQVAYRETIRGTVEQNSKFVRQSGGRGQYGHVVVKFEPLEVSTNDAGEEKIFEFVDEIVGGVIPKEFIGPVAKGIEEQMTNGVLAGYPMIGVKATLFDGSYHDVDSSEMAFKIAGSMALKEGAKKANACILEPIMKVEVVTPEDYLGDVMGDLNRRRGIIEGMDENPSGRVVSALVPLAEMFGYATNVRSMSQGRASFSMEFKKYAEVPNNIADEIIKSRNS.

Residues Glu-8 to Asn-290 enclose the tr-type G domain. GTP-binding positions include Ala-17–Thr-24, Asp-88–His-92, and Asn-142–Asp-145.

Belongs to the TRAFAC class translation factor GTPase superfamily. Classic translation factor GTPase family. EF-G/EF-2 subfamily.

The protein resides in the cytoplasm. Its function is as follows. Catalyzes the GTP-dependent ribosomal translocation step during translation elongation. During this step, the ribosome changes from the pre-translocational (PRE) to the post-translocational (POST) state as the newly formed A-site-bound peptidyl-tRNA and P-site-bound deacylated tRNA move to the P and E sites, respectively. Catalyzes the coordinated movement of the two tRNA molecules, the mRNA and conformational changes in the ribosome. The polypeptide is Elongation factor G (Francisella philomiragia subsp. philomiragia (strain ATCC 25017 / CCUG 19701 / FSC 153 / O#319-036)).